The sequence spans 472 residues: Protein PIN-LIKES 1 (472 aa).

Residues 1 to 93 lie on the Lumenal side of the membrane; that stretch reads MSLTQSAKLH…FYSMRMRLLD (93 aa). The chain crosses the membrane as a helical span at residues 94–114; it reads LFITSSIPVAKILLITGIGFY. The Cytoplasmic portion of the chain corresponds to 115 to 133; the sequence is LALDQVNILNHDARKQLNN. The helical transmembrane segment at 134 to 154 threads the bilayer; that stretch reads IVFYVFSPSLVASSLSETITY. Residues 155 to 161 lie on the Lumenal side of the membrane; sequence ESMVKMW. The helical transmembrane segment at 162-182 threads the bilayer; the sequence is FMPLNVLLTFIIGSFLGWIVI. The Cytoplasmic segment spans residues 183–193; that stretch reads KITKPPSHLRG. The helical transmembrane segment at 194 to 214 threads the bilayer; sequence IIVGCCAAGNLGNMPLIIIPA. Over 215–231 the chain is Lumenal; the sequence is ICNEKGSPFGDPESCEK. Residues 232–252 traverse the membrane as a helical segment; that stretch reads FGLGYIALSMAIGAIYIWTYV. Residues 253 to 309 are Cytoplasmic-facing; sequence YNLMRMLANPAGETAINSTSSTMPLISPKVEVAEQVGTWGKVKQRVCSVAEKINLRT. A helical transmembrane segment spans residues 310-330; the sequence is IFAPSTIAALIALAVGLNPLL. Topologically, residues 331–347 are lumenal; that stretch reads RKLLVGNTAPLRVIEDS. The helical transmembrane segment at 348–368 threads the bilayer; it reads VSLLGDGAIPVLTLIVGGNLL. Residues 369–379 are Cytoplasmic-facing; that stretch reads NGLRGSGINKS. Residues 380–400 traverse the membrane as a helical segment; that stretch reads VIMGVVVVRYLLLPILGVFIV. Over 401–413 the chain is Lumenal; the sequence is RGAHYLGLVTSEP. Residues 414–434 traverse the membrane as a helical segment; the sequence is LYQFVLLLQYVVPPAMNLGTI. The Cytoplasmic segment spans residues 435 to 446; sequence TQLFGSGESECS. Residues 447–467 traverse the membrane as a helical segment; that stretch reads VILFWSYALASVSLTVWPTFF. The Lumenal segment spans residues 468–472; that stretch reads MWLVA.

Belongs to the auxin efflux carrier (TC 2.A.69.2) family. As to expression, expressed in flowers.

The protein resides in the endoplasmic reticulum membrane. Involved in cellular auxin homeostasis by regulating auxin metabolism. Regulates intracellular auxin accumulation at the endoplasmic reticulum and thus auxin availability for nuclear auxin signaling. The protein is Protein PIN-LIKES 1 of Arabidopsis thaliana (Mouse-ear cress).